Consider the following 247-residue polypeptide: uncharacterized protein (247 aa).

The interval 225 to 247 is disordered; the sequence is LASAPVPPSGSGNSGHRRANLGL.

This is an uncharacterized protein from Methanocaldococcus jannaschii (strain ATCC 43067 / DSM 2661 / JAL-1 / JCM 10045 / NBRC 100440) (Methanococcus jannaschii).